Here is a 246-residue protein sequence, read N- to C-terminus: MQSCRTVAVIPARHASTRFPGKPLAIIAGRTMIEHVWRRCQEAQAFDEVWVATDDDRIRAAVEGFGGKAVMTSPACATGTDRVAEVALGRPDIDIWVNVQGDEPLVDPATLQRLAGLFQDASVRMGTLVRPLEADEAASPHVVKAVLALNGDALYFSRSLVPHVREPGTPVQRWGHIGLYGYRREVLLSLAKLAPTPLEDAEKLEQLRALEHGIPIRCAKVTSHTVAVDLPGDVEKVEALMRARGG.

The protein belongs to the KdsB family.

It localises to the cytoplasm. It catalyses the reaction 3-deoxy-alpha-D-manno-oct-2-ulosonate + CTP = CMP-3-deoxy-beta-D-manno-octulosonate + diphosphate. The protein operates within nucleotide-sugar biosynthesis; CMP-3-deoxy-D-manno-octulosonate biosynthesis; CMP-3-deoxy-D-manno-octulosonate from 3-deoxy-D-manno-octulosonate and CTP: step 1/1. It functions in the pathway bacterial outer membrane biogenesis; lipopolysaccharide biosynthesis. In terms of biological role, activates KDO (a required 8-carbon sugar) for incorporation into bacterial lipopolysaccharide in Gram-negative bacteria. The chain is 3-deoxy-manno-octulosonate cytidylyltransferase from Myxococcus xanthus (strain DK1622).